Here is a 353-residue protein sequence, read N- to C-terminus: Guanidino acid hydrolase, mitochondrial (353 aa).

A mitochondrion-targeting transit peptide spans 1–33 (MLQLLKSSWVRSAGSGVVTWRASAGLFCPGTRQ). The interval 29 to 52 (PGTRQASDTSDTLHHPSPSSESQV) is disordered. Positions 163 and 188 each coordinate Mn(2+). Residue lysine 194 is modified to N6-acetyllysine. N6-acetyllysine; alternate is present on lysine 218. N6-succinyllysine; alternate is present on lysine 218. Mn(2+) is bound at residue aspartate 279.

Belongs to the arginase family. Agmatinase subfamily. Mn(2+) serves as cofactor.

The protein localises to the mitochondrion. It carries out the reaction 3-guanidinopropanoate + H2O = urea + beta-alanine. The enzyme catalyses 4-guanidinobutanoate + H2O = urea + 4-aminobutanoate. The catalysed reaction is taurocyamine + H2O = urea + taurine. It catalyses the reaction L-arginine + H2O = urea + L-ornithine. Its pathway is nitrogen metabolism; urea cycle; L-ornithine and urea from L-arginine: step 1/1. Functionally, hydrolyzes linear guanidino acids to form urea and the corresponding amines. Displays specificity for substrates having a negatively charged head group and short chains including taurocyamine, guanidino propanoic and butanoic acids. May protect cells by detoxifying potentially harmful amounts of guanidino acids. Metabolizes L-arginine with low efficiency. The protein is Guanidino acid hydrolase, mitochondrial (Agmat) of Rattus norvegicus (Rat).